The following is a 305-amino-acid chain: tRNA uridine(34) hydroxylase (305 aa).

The region spanning 136–230 (ADENTVVVDK…YLEEVPREQS (95 aa)) is the Rhodanese domain. Cys190 serves as the catalytic Cysteine persulfide intermediate.

It belongs to the TrhO family.

The enzyme catalyses uridine(34) in tRNA + AH2 + O2 = 5-hydroxyuridine(34) in tRNA + A + H2O. Its function is as follows. Catalyzes oxygen-dependent 5-hydroxyuridine (ho5U) modification at position 34 in tRNAs. This chain is tRNA uridine(34) hydroxylase, found in Brucella melitensis biotype 1 (strain ATCC 23456 / CCUG 17765 / NCTC 10094 / 16M).